We begin with the raw amino-acid sequence, 89 residues long: Teretoxin Tan6.8 (89 aa).

Positions 1 to 21 are cleaved as a signal peptide; the sequence is MRLLLILLLLTPVILAGSLDE. The disordered stretch occupies residues 22-42; the sequence is EPNNADGANAASFTADQEGRH. The propeptide occupies 22–44; the sequence is EPNNADGANAASFTADQEGRHKR.

Contains 3 disulfide bonds. As to expression, expressed by the venom duct.

The protein localises to the secreted. The sequence is that of Teretoxin Tan6.8 from Terebra anilis (Auger snail).